A 330-amino-acid chain; its full sequence is Ketol-acid reductoisomerase (NADP(+)) (330 aa).

The KARI N-terminal Rossmann domain occupies 3-184 (LSVYYDKDID…GGGRMGVLET (182 aa)). Residues 26-29 (YGTQ), Ser52, and Ser54 each bind NADP(+). The active site involves His109. NADP(+) is bound at residue Gly135. The KARI C-terminal knotted domain maps to 185-329 (SFKEECESDL…EILRTPFNHE (145 aa)). Mg(2+)-binding residues include Asp193, Glu197, Glu229, and Glu233. Ser254 contributes to the substrate binding site.

It belongs to the ketol-acid reductoisomerase family. Mg(2+) serves as cofactor.

It catalyses the reaction (2R)-2,3-dihydroxy-3-methylbutanoate + NADP(+) = (2S)-2-acetolactate + NADPH + H(+). It carries out the reaction (2R,3R)-2,3-dihydroxy-3-methylpentanoate + NADP(+) = (S)-2-ethyl-2-hydroxy-3-oxobutanoate + NADPH + H(+). Its pathway is amino-acid biosynthesis; L-isoleucine biosynthesis; L-isoleucine from 2-oxobutanoate: step 2/4. It participates in amino-acid biosynthesis; L-valine biosynthesis; L-valine from pyruvate: step 2/4. In terms of biological role, involved in the biosynthesis of branched-chain amino acids (BCAA). Catalyzes an alkyl-migration followed by a ketol-acid reduction of (S)-2-acetolactate (S2AL) to yield (R)-2,3-dihydroxy-isovalerate. In the isomerase reaction, S2AL is rearranged via a Mg-dependent methyl migration to produce 3-hydroxy-3-methyl-2-ketobutyrate (HMKB). In the reductase reaction, this 2-ketoacid undergoes a metal-dependent reduction by NADPH to yield (R)-2,3-dihydroxy-isovalerate. The polypeptide is Ketol-acid reductoisomerase (NADP(+)) (Helicobacter acinonychis (strain Sheeba)).